Here is a 157-residue protein sequence, read N- to C-terminus: Immediate-early protein ICP-18 (157 aa).

In Frog virus 3 (isolate Goorha) (FV-3), this protein is Immediate-early protein ICP-18.